Consider the following 667-residue polypeptide: YTH domain-containing protein ECT2 (667 aa).

2 disordered regions span residues 264 to 305 (QRPV…PSSV) and 379 to 398 (NELN…GNLD). Residues 267–285 (VSGSGVASSYSKSSTVPSS) show a composition bias toward low complexity. The segment covering 286 to 305 (RNQNYRSNSHYTSVHQPSSV) has biased composition (polar residues). Positions 442–579 (AMFFIIKSYS…EQGLKIVKIF (138 aa)) constitute a YTH domain. RNA is bound by residues 448–450 (KSY), Asp-454, 464–465 (WA), Asn-497, Trp-521, Trp-526, and Trp-534. The segment at 606–667 (KAKQTQKQVS…VTGDVVANGC (62 aa)) is disordered. The segment covering 614 to 627 (VSEEKVTDEKKESA) has biased composition (basic and acidic residues). Positions 628 to 639 (TAESASKESPAA) are enriched in low complexity.

In terms of assembly, interacts (via C-terminus) with CIPK1. As to expression, expressed in the shoot apex, at the sites of leaf formation, and in emerging leaves. Highly expressed in rapidly developing tissues.

It is found in the cytoplasm. Its subcellular location is the nucleus. Functionally, specifically recognizes and binds N6-methyladenosine (m6A)-containing RNAs, and regulates mRNA stability. M6A is a modification present at internal sites of mRNAs and some non-coding RNAs and plays a role in mRNA stability and processing. Binds preferentially in the 3'UTRs of target genes. May play dual roles in regulating 3'UTR processing in the nucleus and facilitating mRNA stability in the cytoplasm. Required for the correct timing of leaf formation and normal leaf morphology. Functions redundantly with ECT3. Required for proper trichome branching and morphology. Controls trichome morphology by binding transcripts related to trichome morphogenesis and affecting their stability. This chain is YTH domain-containing protein ECT2, found in Arabidopsis thaliana (Mouse-ear cress).